A 90-amino-acid chain; its full sequence is MTRTIICRKYKEELPGLERPPYPGAKGQDIFDHVSAKAWGDWLKHQTLLINEKRLNMMNAEDRKYLAGEMDKFFSGEEYAKADGYVPPAQ.

The protein belongs to the Fe(2+)-trafficking protein family.

Its function is as follows. Could be a mediator in iron transactions between iron acquisition and iron-requiring processes, such as synthesis and/or repair of Fe-S clusters in biosynthetic enzymes. This is Probable Fe(2+)-trafficking protein from Pseudomonas fluorescens (strain SBW25).